The sequence spans 41 residues: Submaxillary gland androgen-regulated protein 2, isoform beta (41 aa).

Residues Met1 to Lys22 form the signal peptide.

It localises to the secreted. Its function is as follows. May play a role in protection or detoxification. This is Submaxillary gland androgen-regulated protein 2, isoform beta (Smr2) from Mus musculus (Mouse).